Here is a 479-residue protein sequence, read N- to C-terminus: Zinc finger and SCAN domain-containing protein 26 (479 aa).

Lysine 17 is covalently cross-linked (Glycyl lysine isopeptide (Lys-Gly) (interchain with G-Cter in SUMO2)). The 83-residue stretch at 51 to 133 (CKRFRQLRYE…VFLEDLQLEL (83 aa)) folds into the SCAN box domain. The interval 155-187 (TAPGKATPERQVQPEGDVPQPEREKGEAKRIEN) is disordered. Positions 174–187 (QPEREKGEAKRIEN) are enriched in basic and acidic residues. The C2H2-type 1; degenerate zinc-finger motif lies at 232–254 (CKCSEYGQAFFQHSDLIKHESSH). 7 consecutive C2H2-type zinc fingers follow at residues 283-305 (HQCH…QKIH), 311-333 (YQCK…LRIH), 339-361 (YLCI…QRIH), 367-389 (CQCK…QRIH), 395-417 (HQCN…HRIH), 423-445 (FKCT…VRIH), and 451-473 (YKCN…QRYH).

The protein resides in the nucleus. In terms of biological role, may be involved in transcriptional regulation. This Bos taurus (Bovine) protein is Zinc finger and SCAN domain-containing protein 26 (ZSCAN26).